The following is a 36-amino-acid chain: Conotoxin Cal6.1h (36 aa).

The propeptide occupies 1–7 (GLGRPSR). 3 cysteine pairs are disulfide-bonded: Cys-9–Cys-25, Cys-16–Cys-29, and Cys-24–Cys-34.

This sequence belongs to the conotoxin O1 superfamily. Expressed by the venom duct.

The protein resides in the secreted. Probable neurotoxin with unknown target. Possibly targets ion channels. The polypeptide is Conotoxin Cal6.1h (Californiconus californicus (California cone)).